Here is a 41-residue protein sequence, read N- to C-terminus: Large ribosomal subunit protein bL36 (41 aa).

The protein belongs to the bacterial ribosomal protein bL36 family.

This chain is Large ribosomal subunit protein bL36, found in Methylocella silvestris (strain DSM 15510 / CIP 108128 / LMG 27833 / NCIMB 13906 / BL2).